A 437-amino-acid chain; its full sequence is Chromosomal replication initiator protein DnaA (437 aa).

The segment at 1–69 is domain I, interacts with DnaA modulators; it reads MLGDTTLKQL…AHLFELSTGI (69 aa). Residues 69-100 form a domain II region; that stretch reads IRPKIEIRLGSLKKDVKSSSPKAGVSKGQKST. The interval 101-315 is domain III, AAA+ region; that stretch reads ILNPSFTFDS…GIIIKLNAYA (215 aa). ATP is bound by residues glycine 145, glycine 147, lysine 148, and threonine 149. Residues 316–437 are domain IV, binds dsDNA; sequence NLMNQEITLQ…ELKNKIKSRN (122 aa).

The protein belongs to the DnaA family. As to quaternary structure, oligomerizes as a right-handed, spiral filament on DNA at oriC.

It localises to the cytoplasm. Functionally, plays an essential role in the initiation and regulation of chromosomal replication. ATP-DnaA binds to the origin of replication (oriC) to initiate formation of the DNA replication initiation complex once per cell cycle. Binds the DnaA box (a 9 base pair repeat at the origin) and separates the double-stranded (ds)DNA. Forms a right-handed helical filament on oriC DNA; dsDNA binds to the exterior of the filament while single-stranded (ss)DNA is stabiized in the filament's interior. The ATP-DnaA-oriC complex binds and stabilizes one strand of the AT-rich DNA unwinding element (DUE), permitting loading of DNA polymerase. After initiation quickly degrades to an ADP-DnaA complex that is not apt for DNA replication. Binds acidic phospholipids. This Wolinella succinogenes (strain ATCC 29543 / DSM 1740 / CCUG 13145 / JCM 31913 / LMG 7466 / NCTC 11488 / FDC 602W) (Vibrio succinogenes) protein is Chromosomal replication initiator protein DnaA.